A 273-amino-acid polypeptide reads, in one-letter code: Imidazole glycerol phosphate synthase subunit HisF (273 aa).

Catalysis depends on residues Asp12 and Asp136.

The protein belongs to the HisA/HisF family. In terms of assembly, heterodimer of HisH and HisF.

The protein localises to the cytoplasm. It catalyses the reaction 5-[(5-phospho-1-deoxy-D-ribulos-1-ylimino)methylamino]-1-(5-phospho-beta-D-ribosyl)imidazole-4-carboxamide + L-glutamine = D-erythro-1-(imidazol-4-yl)glycerol 3-phosphate + 5-amino-1-(5-phospho-beta-D-ribosyl)imidazole-4-carboxamide + L-glutamate + H(+). It participates in amino-acid biosynthesis; L-histidine biosynthesis; L-histidine from 5-phospho-alpha-D-ribose 1-diphosphate: step 5/9. Its function is as follows. IGPS catalyzes the conversion of PRFAR and glutamine to IGP, AICAR and glutamate. The HisF subunit catalyzes the cyclization activity that produces IGP and AICAR from PRFAR using the ammonia provided by the HisH subunit. In Halobacterium salinarum (strain ATCC 29341 / DSM 671 / R1), this protein is Imidazole glycerol phosphate synthase subunit HisF.